A 397-amino-acid polypeptide reads, in one-letter code: Digeranylgeranylglycerophospholipid reductase (397 aa).

Positions 15, 34, 45, 46, 48, 101, 125, 163, 284, 296, and 297 each coordinate FAD. The a 2,3-bis-O-(geranylgeranyl)-sn-glycerol 1-phospholipid site is built by Lys339 and Val375.

The protein belongs to the geranylgeranyl reductase family. DGGGPL reductase subfamily. FAD serves as cofactor.

The enzyme catalyses 2,3-bis-O-(phytanyl)-sn-glycerol 1-phosphate + 8 NADP(+) = 2,3-bis-O-(geranylgeranyl)-sn-glycerol 1-phosphate + 8 NADPH + 8 H(+). It carries out the reaction 2,3-bis-O-(phytanyl)-sn-glycerol 1-phosphate + 8 NAD(+) = 2,3-bis-O-(geranylgeranyl)-sn-glycerol 1-phosphate + 8 NADH + 8 H(+). The catalysed reaction is a 2,3-bis-O-phytanyl-sn-glycerol 1-phospholipid + 8 A = a 2,3-bis-O-(geranylgeranyl)-sn-glycerol 1-phospholipid + 8 AH2. It catalyses the reaction CDP-2,3-bis-O-(geranylgeranyl)-sn-glycerol + 8 AH2 = CDP-2,3-bis-O-(phytanyl)-sn-glycerol + 8 A. The enzyme catalyses archaetidylserine + 8 AH2 = 2,3-bis-O-phytanyl-sn-glycero-3-phospho-L-serine + 8 A. It functions in the pathway membrane lipid metabolism; glycerophospholipid metabolism. Functionally, is involved in the reduction of 2,3-digeranylgeranylglycerophospholipids (unsaturated archaeols) into 2,3-diphytanylglycerophospholipids (saturated archaeols) in the biosynthesis of archaeal membrane lipids. Catalyzes the formation of archaetidic acid (2,3-di-O-phytanyl-sn-glyceryl phosphate) from 2,3-di-O-geranylgeranylglyceryl phosphate (DGGGP) via the hydrogenation of each double bond of the isoprenoid chains. Is also probably able to reduce double bonds of geranyl groups in CDP-2,3-bis-O-(geranylgeranyl)-sn-glycerol and archaetidylserine, thus acting at various stages in the biosynthesis of archaeal membrane lipids. The chain is Digeranylgeranylglycerophospholipid reductase from Picrophilus torridus (strain ATCC 700027 / DSM 9790 / JCM 10055 / NBRC 100828 / KAW 2/3).